We begin with the raw amino-acid sequence, 507 residues long: Probable Xaa-Pro aminopeptidase ARB_01886 (507 aa).

The Mn(2+) site is built by aspartate 275, aspartate 286, glutamate 434, and glutamate 478.

Belongs to the peptidase M24B family. The cofactor is Mn(2+).

The catalysed reaction is Release of any N-terminal amino acid, including proline, that is linked to proline, even from a dipeptide or tripeptide.. Its function is as follows. Catalyzes the removal of a penultimate prolyl residue from the N-termini of peptides. In Arthroderma benhamiae (strain ATCC MYA-4681 / CBS 112371) (Trichophyton mentagrophytes), this protein is Probable Xaa-Pro aminopeptidase ARB_01886.